A 57-amino-acid polypeptide reads, in one-letter code: Large ribosomal subunit protein eL20 (57 aa).

It belongs to the eukaryotic ribosomal protein eL20 family. In terms of assembly, part of the 50S ribosomal subunit. Binds 23S rRNA.

The polypeptide is Large ribosomal subunit protein eL20 (Archaeoglobus fulgidus (strain ATCC 49558 / DSM 4304 / JCM 9628 / NBRC 100126 / VC-16)).